The sequence spans 136 residues: MLQPKRMKFRKMFKGRNRGLANGTEVSFGTFGLKAVGRGRLTARQIESARRAMTRHVKRQGQIWIRVFPDKPITSKPLEVRMGKGKGNVEYWVCQIQPGKVLYEMDGVPESLAREAFALASAKLPIKTTFVTKTVM.

It belongs to the universal ribosomal protein uL16 family. Part of the 50S ribosomal subunit.

Its function is as follows. Binds 23S rRNA and is also seen to make contacts with the A and possibly P site tRNAs. The sequence is that of Large ribosomal subunit protein uL16 from Shewanella denitrificans (strain OS217 / ATCC BAA-1090 / DSM 15013).